Reading from the N-terminus, the 122-residue chain is uncharacterized protein (122 aa).

2 consecutive transmembrane segments (helical) span residues 36–56 and 72–92; these read SVRS…YSQF and AVFL…FSTD.

The protein localises to the membrane. This is an uncharacterized protein from Saccharomyces cerevisiae (strain ATCC 204508 / S288c) (Baker's yeast).